We begin with the raw amino-acid sequence, 499 residues long: Cysteine--tRNA ligase (499 aa).

Cysteine 29 is a binding site for Zn(2+). Positions valine 31–histidine 41 match the 'HIGH' region motif. 3 residues coordinate Zn(2+): cysteine 213, histidine 238, and glutamate 242. A 'KMSKS' region motif is present at residues lysine 270 to serine 274. Lysine 273 is an ATP binding site.

The protein belongs to the class-I aminoacyl-tRNA synthetase family. As to quaternary structure, monomer. Requires Zn(2+) as cofactor.

The protein localises to the cytoplasm. It catalyses the reaction tRNA(Cys) + L-cysteine + ATP = L-cysteinyl-tRNA(Cys) + AMP + diphosphate. This is Cysteine--tRNA ligase from Synechococcus sp. (strain CC9902).